The primary structure comprises 727 residues: MNQANFLQELPNVLKRLETGLIIPQLKDILRVFGLRLSGTKAELITRIKQLIERIAIENNTTSWEALKKAIDGDVTSAVCILKYNTYQIYSAAAPIAPPSSASGNRSYSRPFAPVVHSRIRFRKSPFYDILEQFNAPFVVPACVGTRNTISFSFHVTPPALSKLLNDPKQYRVYLFSTPSETIGFGNCLMEFPTPQMELRINNQVAHANYRRLKGKPGTTNPADITDLVSKYAGPPGNNVVIYYMNSTKSYSVVVCFVKVYTIENLVDQIKSRKAESKEKIIERIKNDNQDADIIATSTDISLKCPLSFSRISLPVRSVFCKHIQCFDASAFLEMNKQTPSWMCPVCASHIQFSDLIIDGFMQHILESTPSNSETITVDPEGNWKLNTFDEPVESSEDEFVPKEKVIELSDGEGISTMANKSNDQPTRRASTHNSGPPAKRKRESLVIDLTISDDDENVATSTTESPSNATKENSLSRNVQSPNIDTAISNRSTNVRHGHPGFKDYTVENSPASRERSTSESAQSSVHMGYAGEGGLLSGALRAPSQQNNNNSNTQHSINLHTIVPSPYEPPLSVTPSTAITNLSIPESNRTNSSASSKSFTMNDLILPPLHLKNTTQTNNAHEDAQSSNLSQNHSLFYERIPQRPSYRIEKQNKGIYEDENEQSISAMPIPRAHPQLPKNLLSQTAGPLWDEQQDAQVDWNSELQSNNSYHNSGFEGTGNTFQSID.

Residues 18 to 52 (ETGLIIPQLKDILRVFGLRLSGTKAELITRIKQLI) enclose the SAP domain. In terms of domain architecture, PINIT spans 108–261 (YSRPFAPVVH…SVVVCFVKVY (154 aa)). The SP-RING-type zinc-finger motif lies at 290 to 371 (QDADIIATST…MQHILESTPS (82 aa)). Residues Cys-321, His-323, Cys-344, and Cys-347 each contribute to the Zn(2+) site. Residues Ser-395 and Ser-396 each carry the phosphoserine modification. Disordered stretches follow at residues 408–558 (ELSD…TQHS) and 706–727 (QSNN…QSID). Composition is skewed to polar residues over residues 417–435 (TMAN…THNS) and 459–494 (VATS…NRST). The span at 546–558 (SQQNNNNSNTQHS) shows a compositional bias: low complexity.

This sequence belongs to the PIAS family. As to quaternary structure, interacts with hus5/ubc9.

The protein resides in the nucleus. It functions in the pathway protein modification; protein sumoylation. Its function is as follows. Acts as an E3 ligase mediating SUMO/Smt3 attachment to other proteins. Involved in the maintenance of the centromere and in telomere length. Regulates recombination, via extension sumoylation, particularly within the heterochromatin repeats. This chain is E3 SUMO-protein ligase pli1 (pli1), found in Schizosaccharomyces pombe (strain 972 / ATCC 24843) (Fission yeast).